The following is a 51-amino-acid chain: Large ribosomal subunit protein eL40 (51 aa).

4 residues coordinate Zn(2+): Cys-17, Cys-20, Cys-31, and Cys-34.

Belongs to the eukaryotic ribosomal protein eL40 family. Part of the 50S ribosomal subunit. Requires Zn(2+) as cofactor.

The chain is Large ribosomal subunit protein eL40 from Thermococcus kodakarensis (strain ATCC BAA-918 / JCM 12380 / KOD1) (Pyrococcus kodakaraensis (strain KOD1)).